The following is a 477-amino-acid chain: MPFCLLDVDKDIPEREQHIYIKDSKEPKGHCKQRCNTNTIPGSMTERGCAFAGVKGVITGAIKDVLHVVHSPVGCTAYGNGTTKRYPTRPEMPDGSVFPVENFNLKHIVGTDLTESDVVFGGMNKLKKVIREASKEFPFVNAIYVYATCTTGLIGDDLDAVCKEMQAELGKDVVAFNAPGFAGPTQSKGHHVGNYTIFENLVGTKEPPKTTDYDINLIGEYNIDGDYWVLEKYFEDMGINVLSKFTGDATHGELCWMHKAKLSLVRCQRSATYVAKLIEEKYGVPYLKVDFFGPEYCAENLRAVGKYFGKEIEAEAVIQKEMEKIQPELDFYQSKLQGKKIWISAGGPKSWHLSKPIEQYLGMDVVALSGLFEHEDGYEKMQERAKDGTIIIDDPNTLEMEEVVEKYQPEIVLGGIKEKYFFHKLGVPSVMIHSYENGPYIGFGGFVNMARDIFTAIYNPAWKLMGFGEGEPGDSNE.

Residues Cys-49, Cys-75, and Cys-149 each contribute to the [8Fe-7S] cluster site. [7Fe-Mo-9S-C-homocitryl] cluster contacts are provided by Cys-267 and His-433.

The protein belongs to the NifD/NifK/NifE/NifN family. As to quaternary structure, tetramer of two alpha and two beta chains. Forms complex with the iron protein (nitrogenase component 2). The cofactor is [8Fe-7S] cluster. [7Fe-Mo-9S-C-homocitryl] cluster serves as cofactor.

It catalyses the reaction N2 + 8 reduced [2Fe-2S]-[ferredoxin] + 16 ATP + 16 H2O = H2 + 8 oxidized [2Fe-2S]-[ferredoxin] + 2 NH4(+) + 16 ADP + 16 phosphate + 6 H(+). Its function is as follows. This molybdenum-iron protein is part of the nitrogenase complex that catalyzes the key enzymatic reactions in nitrogen fixation. In Methanococcus maripaludis (Methanococcus deltae), this protein is Nitrogenase molybdenum-iron protein alpha chain (nifD).